The chain runs to 206 residues: CASP-like protein 4B2 (206 aa).

2 stretches are compositionally biased toward low complexity: residues 1 to 12 and 24 to 36; these read MAMVPADADAAA and SSQN…AAAA. Residues 1 to 42 are disordered; the sequence is MAMVPADADAAAKPPPDVEKPDYSSQNGAPNSAAAAAGGGGG. The Cytoplasmic segment spans residues 1–60; it reads MAMVPADADAAAKPPPDVEKPDYSSQNGAPNSAAAAAGGGGGGVVDSVVARWRREDMLDK. Residues 61–81 form a helical membrane-spanning segment; it reads SPLALHAAAAAFAFVALVLVA. Topologically, residues 82–99 are extracellular; it reads SNQHGDWMEFDRYQEYRY. The chain crosses the membrane as a helical span at residues 100–120; sequence LLAIAALAFAYSLAQALRHAL. At 121 to 138 the chain is on the cytoplasmic side; the sequence is RMRRGVDPVPTASGRLLD. The helical transmembrane segment at 139–159 threads the bilayer; sequence FASDQVVAYLLMSALSAATPI. At 160 to 174 the chain is on the extracellular side; sequence TNRMRSAVINRFTDT. Residues 175-195 traverse the membrane as a helical segment; it reads TAAAISMAFLAFVSLALSAIV. Topologically, residues 196 to 206 are cytoplasmic; the sequence is SGYKLSKQTYM.

Belongs to the Casparian strip membrane proteins (CASP) family. In terms of assembly, homodimer and heterodimers.

It is found in the cell membrane. The sequence is that of CASP-like protein 4B2 from Oryza sativa subsp. japonica (Rice).